The sequence spans 478 residues: Nuclear distribution protein PAC1 (478 aa).

The LisH domain occupies 9 to 41; sequence QAEELHKAMIAYLLSANLPKSAAALREELADSV. Residues 60–87 are a coiled coil; it reads TSVVRLQKKIMDLESRNNALQSELDSAT. WD repeat units follow at residues 113 to 154, 156 to 196, 200 to 247, 250 to 289, 292 to 352, 354 to 393, 398 to 439, and 440 to 477; these read SHRE…RTIK, HTKA…KNIR, GHDH…CVKT, GHVD…TKST, GHEH…IKTL, GHDN…KCVR, AHGH…GASA, and INGV…RVFA.

It belongs to the WD repeat LIS1/nudF family. Self-associates. Interacts with NDL1 and dynein.

The protein localises to the cytoplasm. It localises to the cytoskeleton. It is found in the spindle pole. In terms of biological role, positively regulates the activity of the minus-end directed microtubule motor protein dynein. May enhance dynein-mediated microtubule sliding by targeting dynein to the microtubule plus end. Required for nuclear migration during vegetative growth as well as development. Required for retrograde early endosome (EE) transport from the hyphal tip. Required for localization of dynein to the mitotic spindle poles. Recruits additional proteins to the dynein complex at SPBs. The sequence is that of Nuclear distribution protein PAC1 from Paracoccidioides brasiliensis (strain Pb03).